The following is a 260-amino-acid chain: Alpha-acetolactate decarboxylase (260 aa).

Belongs to the alpha-acetolactate decarboxylase family.

It catalyses the reaction (2S)-2-acetolactate + H(+) = (R)-acetoin + CO2. Its pathway is polyol metabolism; (R,R)-butane-2,3-diol biosynthesis; (R,R)-butane-2,3-diol from pyruvate: step 2/3. Functionally, converts acetolactate into acetoin, which can be excreted by the cells. This may be a mechanism for controlling the internal pH of cells in the stationary stage. The chain is Alpha-acetolactate decarboxylase (budA) from Klebsiella aerogenes (Enterobacter aerogenes).